A 297-amino-acid chain; its full sequence is 4-diphosphocytidyl-2-C-methyl-D-erythritol kinase (297 aa).

Residues Lys6 and Asp144 contribute to the active site.

The protein belongs to the GHMP kinase family. IspE subfamily.

The catalysed reaction is 4-CDP-2-C-methyl-D-erythritol + ATP = 4-CDP-2-C-methyl-D-erythritol 2-phosphate + ADP + H(+). It participates in isoprenoid biosynthesis; isopentenyl diphosphate biosynthesis via DXP pathway; isopentenyl diphosphate from 1-deoxy-D-xylulose 5-phosphate: step 3/6. Catalyzes the phosphorylation of the position 2 hydroxy group of 4-diphosphocytidyl-2C-methyl-D-erythritol. The chain is 4-diphosphocytidyl-2-C-methyl-D-erythritol kinase from Leptospira interrogans serogroup Icterohaemorrhagiae serovar Lai (strain 56601).